We begin with the raw amino-acid sequence, 1028 residues long: U2 snRNP-associated SURP motif-containing protein (1028 aa).

Disordered stretches follow at residues methionine 1–lysine 111 and valine 141–threonine 272. Alanine 2 is subject to N-acetylalanine. A compositionally biased stretch (polar residues) spans glycine 7–threonine 16. A compositionally biased stretch (basic residues) spans threonine 45–asparagine 54. Basic and acidic residues predominate over residues tyrosine 55 to leucine 64. Residue serine 67 is modified to Phosphoserine. Residue lysine 80 forms a Glycyl lysine isopeptide (Lys-Gly) (interchain with G-Cter in SUMO2) linkage. The stretch at alanine 92–leucine 121 forms a coiled coil. Composition is skewed to basic and acidic residues over residues serine 97–lysine 111 and alanine 144–glycine 155. Glycyl lysine isopeptide (Lys-Gly) (interchain with G-Cter in SUMO2) cross-links involve residues lysine 145 and lysine 168. The span at asparagine 169–arginine 178 shows a compositional bias: polar residues. The span at glutamate 186–histidine 222 shows a compositional bias: basic and acidic residues. The stretch at leucine 192 to glutamate 232 forms a coiled coil. Phosphoserine is present on serine 202. Lysine 208 is covalently cross-linked (Glycyl lysine isopeptide (Lys-Gly) (interchain with G-Cter in SUMO2)). Residue serine 236 is modified to Phosphoserine. Residues aspartate 239–serine 249 show a composition bias toward basic and acidic residues. The RRM domain maps to threonine 273 to alanine 354. The SURP motif repeat unit spans residues leucine 429–tyrosine 472. Serine 484 carries the phosphoserine modification. The CID domain maps to leucine 533–valine 678. The residue at position 718 (threonine 718) is a Phosphothreonine. Residues lysine 747 and lysine 748 each participate in a glycyl lysine isopeptide (Lys-Gly) (interchain with G-Cter in SUMO2) cross-link. Residue lysine 759 is modified to N6-acetyllysine; alternate. Lysine 759 is covalently cross-linked (Glycyl lysine isopeptide (Lys-Gly) (interchain with G-Cter in SUMO2); alternate). Disordered stretches follow at residues lysine 777–arginine 840 and glutamine 854–histidine 1028. A coiled-coil region spans residues glutamate 779–lysine 809. Over residues glutamate 785–threonine 805 the composition is skewed to acidic residues. Phosphoserine is present on residues serine 787, serine 799, and serine 810. 2 stretches are compositionally biased toward basic and acidic residues: residues lysine 809–arginine 840 and glutamine 873–arginine 921. Residues lysine 821, lysine 828, and lysine 831 each participate in a glycyl lysine isopeptide (Lys-Gly) (interchain with G-Cter in SUMO2) cross-link. A coiled-coil region spans residues serine 836 to lysine 914. A Phosphothreonine modification is found at threonine 930. Phosphoserine is present on residues serine 945 and serine 947. Basic and acidic residues predominate over residues lysine 949 to lysine 979. The segment covering threonine 990–histidine 1028 has biased composition (basic residues).

It belongs to the splicing factor SR family. Interacts with ERBB4.

It is found in the nucleus. This chain is U2 snRNP-associated SURP motif-containing protein (U2SURP), found in Pongo abelii (Sumatran orangutan).